A 92-amino-acid chain; its full sequence is MKTLLLTLVVVTIVCLDLGDSLICYQAYNTPQTCAPGENLCYTKTWCDYWCHVKGKRIDLGCAATCPTAKPGEDVTCCSRDKCNPHPLQRPR.

A signal peptide spans 1–21; sequence MKTLLLTLVVVTIVCLDLGDS. Cystine bridges form between Cys24–Cys41, Cys34–Cys62, Cys47–Cys51, Cys66–Cys77, and Cys78–Cys83.

The protein belongs to the three-finger toxin family. Long-chain subfamily. Type II alpha-neurotoxin sub-subfamily. Expressed by the venom gland.

It is found in the secreted. Its function is as follows. Binds with high affinity to muscular (alpha-1/CHRNA1) and neuronal (alpha-7/CHRNA7) nicotinic acetylcholine receptor (nAChR) and inhibits acetylcholine from binding to the receptor, thereby impairing neuromuscular and neuronal transmission. The polypeptide is Long neurotoxin 73 (Drysdalia coronoides (White-lipped snake)).